We begin with the raw amino-acid sequence, 430 residues long: MNVKVENIEKNVVKLEITVDSEKFNEAVKKSFKKNAKRFNVPGFRKGKAPLNIIKKYYGEGVLFEDAINFCCEDTYPKAIEENNIKPVDYPQIDVVQIGEGKDFIYTAEVTTVPEVKLGEYKGVEVKKVSYEVEDEAVENELKSMQEKNARVSLKEEGEIEKGNIAIIDFKGYVDGKAFEGGEAKDYEIEIGSGTFIGDFEDQLVGLKKDESKEVNVSFPEEYGREDLNGKPATFEVTIKDIKVKELPALDDEFAKEVSEFDTLEELKSDIKDRMKKELSEKAKAEYEEAVVEAVGANAEIEIPKVMIEKEIENMVRDLEMRLKYQGLDLKSYYEFTNSSEEKVKEYMRETAEKRVKTDLIMQEIAKVEDIKATEEELKEKAMEVAKQYGQKDVEKTAELIANAQKAYLEIDIVNGKVLDLLVESSKEIA.

The PPIase FKBP-type domain maps to 163–248 (GNIAIIDFKG…IKDIKVKELP (86 aa)).

This sequence belongs to the FKBP-type PPIase family. Tig subfamily.

Its subcellular location is the cytoplasm. It catalyses the reaction [protein]-peptidylproline (omega=180) = [protein]-peptidylproline (omega=0). Involved in protein export. Acts as a chaperone by maintaining the newly synthesized protein in an open conformation. Functions as a peptidyl-prolyl cis-trans isomerase. In Clostridium botulinum (strain ATCC 19397 / Type A), this protein is Trigger factor.